We begin with the raw amino-acid sequence, 482 residues long: tRNA sulfurtransferase (482 aa).

The THUMP domain maps to 61–165 (DVTLSVLTQT…NDKLNLIIAR (105 aa)). ATP contacts are provided by residues 183-184 (LI), Lys-265, Gly-287, and Gln-296. Cys-344 and Cys-456 are oxidised to a cystine. One can recognise a Rhodanese domain in the interval 404–482 (LGSDVVVLDI…GYKNVKVYRP (79 aa)). Cys-456 (cysteine persulfide intermediate) is an active-site residue.

Belongs to the ThiI family.

The protein localises to the cytoplasm. It catalyses the reaction [ThiI sulfur-carrier protein]-S-sulfanyl-L-cysteine + a uridine in tRNA + 2 reduced [2Fe-2S]-[ferredoxin] + ATP + H(+) = [ThiI sulfur-carrier protein]-L-cysteine + a 4-thiouridine in tRNA + 2 oxidized [2Fe-2S]-[ferredoxin] + AMP + diphosphate. The catalysed reaction is [ThiS sulfur-carrier protein]-C-terminal Gly-Gly-AMP + S-sulfanyl-L-cysteinyl-[cysteine desulfurase] + AH2 = [ThiS sulfur-carrier protein]-C-terminal-Gly-aminoethanethioate + L-cysteinyl-[cysteine desulfurase] + A + AMP + 2 H(+). The protein operates within cofactor biosynthesis; thiamine diphosphate biosynthesis. In terms of biological role, catalyzes the ATP-dependent transfer of a sulfur to tRNA to produce 4-thiouridine in position 8 of tRNAs, which functions as a near-UV photosensor. Also catalyzes the transfer of sulfur to the sulfur carrier protein ThiS, forming ThiS-thiocarboxylate. This is a step in the synthesis of thiazole, in the thiamine biosynthesis pathway. The sulfur is donated as persulfide by IscS. In Aliivibrio fischeri (strain MJ11) (Vibrio fischeri), this protein is tRNA sulfurtransferase.